We begin with the raw amino-acid sequence, 406 residues long: Cysteine desulfurase (406 aa).

Lysine 226 carries the post-translational modification N6-(pyridoxal phosphate)lysine. Cysteine 364 (cysteine persulfide intermediate) is an active-site residue.

This sequence belongs to the class-V pyridoxal-phosphate-dependent aminotransferase family. Csd subfamily. As to quaternary structure, homodimer. Interacts with SufE and the SufBCD complex composed of SufB, SufC and SufD. The interaction with SufE is required to mediate the direct transfer of the sulfur atom from the S-sulfanylcysteine. Pyridoxal 5'-phosphate serves as cofactor.

The protein resides in the cytoplasm. It catalyses the reaction (sulfur carrier)-H + L-cysteine = (sulfur carrier)-SH + L-alanine. It carries out the reaction L-selenocysteine + AH2 = hydrogenselenide + L-alanine + A + H(+). It participates in cofactor biosynthesis; iron-sulfur cluster biosynthesis. Functionally, cysteine desulfurases mobilize the sulfur from L-cysteine to yield L-alanine, an essential step in sulfur metabolism for biosynthesis of a variety of sulfur-containing biomolecules. Component of the suf operon, which is activated and required under specific conditions such as oxidative stress and iron limitation. Acts as a potent selenocysteine lyase in vitro, that mobilizes selenium from L-selenocysteine. Selenocysteine lyase activity is however unsure in vivo. This Yersinia pestis bv. Antiqua (strain Antiqua) protein is Cysteine desulfurase.